The primary structure comprises 319 residues: Guanosine ABC transporter permease protein NupQ (319 aa).

A run of 9 helical transmembrane segments spans residues Ile6–Leu26, Ile39–Phe59, Ala65–Ile85, Val99–Ile119, Ile159–Leu179, Ile204–Ile224, Gly235–Leu255, Ala257–Phe277, and Asn282–Gly302.

The protein belongs to the binding-protein-dependent transport system permease family. In terms of assembly, the complex is composed of two ATP-binding proteins (NupO), two transmembrane proteins (NupP and NupQ) and a solute-binding protein (NupN).

It is found in the cell membrane. In terms of biological role, part of an ABC transporter complex involved in the uptake of guanosine. Responsible for the translocation of the substrate across the membrane. May be a nucleoside transporter of broad specificity but with various affinities for different substrates. This chain is Guanosine ABC transporter permease protein NupQ, found in Bacillus subtilis (strain 168).